We begin with the raw amino-acid sequence, 134 residues long: Small ribosomal subunit protein uS11 (134 aa).

A disordered region spans residues 1–22 (MAQKTRATAARKPRRKVNKNVT). The segment covering 9-18 (AARKPRRKVN) has biased composition (basic residues).

This sequence belongs to the universal ribosomal protein uS11 family. In terms of assembly, part of the 30S ribosomal subunit. Interacts with proteins S7 and S18. Binds to IF-3.

In terms of biological role, located on the platform of the 30S subunit, it bridges several disparate RNA helices of the 16S rRNA. Forms part of the Shine-Dalgarno cleft in the 70S ribosome. This chain is Small ribosomal subunit protein uS11, found in Kocuria rhizophila (strain ATCC 9341 / DSM 348 / NBRC 103217 / DC2201).